The sequence spans 624 residues: Chaperone protein HtpG (624 aa).

The interval Met-1–Arg-336 is a; substrate-binding. The interval Glu-337–Lys-552 is b. Residues Leu-553–Ser-624 are c.

It belongs to the heat shock protein 90 family. As to quaternary structure, homodimer.

The protein resides in the cytoplasm. Functionally, molecular chaperone. Has ATPase activity. The polypeptide is Chaperone protein HtpG (Shigella boydii serotype 4 (strain Sb227)).